The chain runs to 833 residues: MKYPFMATRGVITFIGNSSTIEVGRPLSLAAIDLAKSDFENKLVLIPQKNIKQNEIEFEKDLENVGILTKIKSIKILSNGNRKIIVEGVERIKLDSIEKDKNNNDIIANLSLYPVLKNENGSSETIIEKMQTSLNNIIESNLPLVANQELSKHESSERYTYILAHYLTMPFEKKFEIFAKKSLTEMLELIFSFLVELKNIQKLDVDLDKDIKKNLDSQQREYLLRERLKVIQKKLGDDENDEEEIEEKLNSKYGKEQYPEEVIKTIKNEKRRLKNMMSSSPEANTSRTYIEWLTNLPWRKVSVDKTNLVKSKEILDSYHYGLKEVKERIIEFLAVMINNNKKHPEDEKTKIQIPNSDYEINKNLFTKKNASDDTYSYKSSNNVPILALVGPPGTGKTSLAKAIAETLDRKFIKISLGGVKDEAEIRGHRRTYVGALPGKIIQAIKKAGVSNPVILLDEIDKMSSDYKGDPTSAMLEVLDPEQNVNFQDHYIELEYDLSKVLFIATANYYQNISAPLLDRVEIIELSSYTSLEKIRIARDYLIKKVLEQNSLEESQFKISDESLDFLIKHYTLEAGVRNLQRALDKLARKIVVKSLENKLEKDFVITSEEIVNLLGVIKYTDDFKENYERIGAVNGLAYTQYGGSTLSIEVTTFPNSKGGIKLTGQLKEVMQESAQIALAFVRSNAKKYEIDFNFEANQIHIHVPEGAVPKDGPSAGVTFTTAIISALKQIPVSHKVGMTGEITLRGKVLPIGGLKEKSLAAHKLGIKTVFIPNENNRNLVEVADEVKESIEFISVSDYDEIFENLFGKLSDNKKITSNSKIPKKDISKANPTH.

The Lon N-terminal domain maps to 3–198 (YPFMATRGVI…LIFSFLVELK (196 aa)). Residue 390–397 (GPPGTGKT) coordinates ATP. Residues 627 to 808 (YERIGAVNGL…DEIFENLFGK (182 aa)) enclose the Lon proteolytic domain. Catalysis depends on residues S714 and K757.

It belongs to the peptidase S16 family. As to quaternary structure, homohexamer. Organized in a ring with a central cavity.

The protein resides in the cytoplasm. The enzyme catalyses Hydrolysis of proteins in presence of ATP.. Functionally, ATP-dependent serine protease that mediates the selective degradation of mutant and abnormal proteins as well as certain short-lived regulatory proteins. Required for cellular homeostasis and for survival from DNA damage and developmental changes induced by stress. Degrades polypeptides processively to yield small peptide fragments that are 5 to 10 amino acids long. Binds to DNA in a double-stranded, site-specific manner. The chain is Lon protease from Mycoplasma mobile (strain ATCC 43663 / 163K / NCTC 11711) (Mesomycoplasma mobile).